An 86-amino-acid chain; its full sequence is Neurotoxin E1x (86 aa).

Residues 1 to 19 (MNSLLMITACLVVIGTVWA) form the signal peptide. The region spanning 20 to 84 (KEGYLVDVKG…TWPLPNKTCG (65 aa)) is the LCN-type CS-alpha/beta domain. 4 disulfides stabilise this stretch: C30/C83, C34/C59, C43/C64, and C47/C66. Position 83 is a cysteine amide (C83).

This sequence belongs to the long (4 C-C) scorpion toxin superfamily. Sodium channel inhibitor family. Beta subfamily. In terms of tissue distribution, expressed by the venom gland.

Its subcellular location is the secreted. Functionally, binds to sodium channels (Nav) and inhibits the inactivation of the activated channels, thereby blocking neuronal transmission. This chain is Neurotoxin E1x, found in Centruroides sculpturatus (Arizona bark scorpion).